The primary structure comprises 317 residues: Apolipoprotein E (317 aa).

An N-terminal signal peptide occupies residues 1–18 (MKVLWAALLVTFLAGCQA). 8 tandem repeats follow at residues 80–101 (TLMD…EQLS), 102–123 (PVAE…ARLG), 124–145 (ADME…AMLG), 146–167 (QSTE…KRLL), 168–189 (RDAD…EGAE), 190–211 (RGVS…VRAA), 212–233 (TVGS…ERLR), and 234–255 (ARME…EQVA). Positions 80-255 (TLMDETMKEL…RLDEVKEQVA (176 aa)) are 8 X 22 AA approximate tandem repeats. Met143 carries the methionine sulfoxide modification. At Ser147 the chain carries Phosphoserine. An LDL and other lipoprotein receptors binding region spans residues 158 to 168 (HLRKLRKRLLR). 162–165 (LRKR) lines the heparin pocket. Positions 210–290 (AATVGSLAGQ…SWFEPLVEDM (81 aa)) are lipid-binding and lipoprotein association. A heparin-binding site is contributed by 229–236 (GERLRARM). A homooligomerization region spans residues 266–317 (QQISLQAEAFQARLKSWFEPLVEDMQRQWAGLVEKVQAAVGASTAPVPSDNH). Residues 278–290 (RLKSWFEPLVEDM) form a specificity for association with VLDL region.

The protein belongs to the apolipoprotein A1/A4/E family. As to quaternary structure, homotetramer. May interact with ABCA1; functionally associated with ABCA1 in the biogenesis of HDLs. May interact with APP/A4 amyloid-beta peptide; the interaction is extremely stable in vitro but its physiological significance is unclear. May interact with MAPT. May interact with MAP2. In the cerebrospinal fluid, interacts with secreted SORL1. Interacts with PMEL; this allows the loading of PMEL luminal fragment on ILVs to induce fibril nucleation. Post-translationally, APOE exists as multiple glycosylated and sialylated glycoforms within cells and in plasma. The extent of glycosylation and sialylation are tissue and context specific. In terms of processing, glycated in plasma VLDL. Phosphorylated by FAM20C in the extracellular medium.

The protein resides in the secreted. It localises to the extracellular space. The protein localises to the extracellular matrix. It is found in the extracellular vesicle. Its subcellular location is the endosome. The protein resides in the multivesicular body. Its function is as follows. APOE is an apolipoprotein, a protein associating with lipid particles, that mainly functions in lipoprotein-mediated lipid transport between organs via the plasma and interstitial fluids. APOE is a core component of plasma lipoproteins and is involved in their production, conversion and clearance. Apolipoproteins are amphipathic molecules that interact both with lipids of the lipoprotein particle core and the aqueous environment of the plasma. As such, APOE associates with chylomicrons, chylomicron remnants, very low density lipoproteins (VLDL) and intermediate density lipoproteins (IDL) but shows a preferential binding to high-density lipoproteins (HDL). It also binds a wide range of cellular receptors including the LDL receptor/LDLR, the LDL receptor-related proteins LRP1, LRP2 and LRP8 and the very low-density lipoprotein receptor/VLDLR that mediate the cellular uptake of the APOE-containing lipoprotein particles. Finally, APOE also has a heparin-binding activity and binds heparan-sulfate proteoglycans on the surface of cells, a property that supports the capture and the receptor-mediated uptake of APOE-containing lipoproteins by cells. A main function of APOE is to mediate lipoprotein clearance through the uptake of chylomicrons, VLDLs, and HDLs by hepatocytes. APOE is also involved in the biosynthesis by the liver of VLDLs as well as their uptake by peripheral tissues ensuring the delivery of triglycerides and energy storage in muscle, heart and adipose tissues. By participating in the lipoprotein-mediated distribution of lipids among tissues, APOE plays a critical role in plasma and tissues lipid homeostasis. APOE is also involved in two steps of reverse cholesterol transport, the HDLs-mediated transport of cholesterol from peripheral tissues to the liver, and thereby plays an important role in cholesterol homeostasis. First, it is functionally associated with ABCA1 in the biogenesis of HDLs in tissues. Second, it is enriched in circulating HDLs and mediates their uptake by hepatocytes. APOE also plays an important role in lipid transport in the central nervous system, regulating neuron survival and sprouting. In Colobus guereza (Mantled guereza), this protein is Apolipoprotein E (APOE).